A 176-amino-acid polypeptide reads, in one-letter code: Nutrient stress-induced DNA-binding protein (176 aa).

This sequence belongs to the Dps family. Hexamer.

Involved in protection of chromosomal DNA from damage under nutrient-limited and oxidative stress conditions. Binds heme. In Synechococcus sp. (strain ATCC 27144 / PCC 6301 / SAUG 1402/1) (Anacystis nidulans), this protein is Nutrient stress-induced DNA-binding protein (dpsA).